Consider the following 277-residue polypeptide: Isoprenyl transferase 1 (277 aa).

The segment at 1 to 30 is disordered; it reads MAVRGILGRQRREYRTPEPHPSGARPPKLG. Asp42 is a catalytic residue. Asp42 provides a ligand contact to Mg(2+). Substrate is bound by residues 43–46, Trp47, Arg55, His59, and 87–89; these read GNGR and STE. Asn90 (proton acceptor) is an active-site residue. Residues Trp91, Arg93, Arg210, and 216-218 contribute to the substrate site; that span reads RTS. Glu229 contributes to the Mg(2+) binding site.

The protein belongs to the UPP synthase family. Homodimer. The cofactor is Mg(2+).

Functionally, catalyzes the condensation of isopentenyl diphosphate (IPP) with allylic pyrophosphates generating different type of terpenoids. The protein is Isoprenyl transferase 1 of Streptomyces coelicolor (strain ATCC BAA-471 / A3(2) / M145).